We begin with the raw amino-acid sequence, 297 residues long: Alarmin release inhibitor (297 aa).

N-linked (GlcNAc...) asparagine glycosylation is found at Asn107, Asn175, and Asn190. The Sushi domain maps to Thr151–Lys211. Residues Cys183 and Cys209 are joined by a disulfide bond.

As to quaternary structure, interacts with mouse IL33 (in reduced form).

The protein localises to the secreted. It is found in the host nucleus. Secreted protein which suppresses the host allergic response by inhibiting the interaction of host IL33 with its receptor in order to maintain parasitic infection. Binds to both host IL33 and host nuclear DNA and this dual binding blocks the interaction of IL33 with its receptor, and tethers IL33 within necrotic cells, preventing its release, and blocking allergic response initiation. This Heligmosomoides polygyrus (Parasitic roundworm) protein is Alarmin release inhibitor.